A 184-amino-acid polypeptide reads, in one-letter code: Large ribosomal subunit protein uL5 (184 aa).

Belongs to the universal ribosomal protein uL5 family. As to quaternary structure, part of the 50S ribosomal subunit; part of the 5S rRNA/L5/L18/L25 subcomplex. Contacts the 5S rRNA and the P site tRNA. Forms a bridge to the 30S subunit in the 70S ribosome.

In terms of biological role, this is one of the proteins that bind and probably mediate the attachment of the 5S RNA into the large ribosomal subunit, where it forms part of the central protuberance. In the 70S ribosome it contacts protein S13 of the 30S subunit (bridge B1b), connecting the 2 subunits; this bridge is implicated in subunit movement. Contacts the P site tRNA; the 5S rRNA and some of its associated proteins might help stabilize positioning of ribosome-bound tRNAs. This chain is Large ribosomal subunit protein uL5, found in Wolinella succinogenes (strain ATCC 29543 / DSM 1740 / CCUG 13145 / JCM 31913 / LMG 7466 / NCTC 11488 / FDC 602W) (Vibrio succinogenes).